Here is an 847-residue protein sequence, read N- to C-terminus: Vacuolar membrane protease (847 aa).

The Cytoplasmic segment spans residues 1–17; the sequence is MQFGKSLLKHVYTRTFK. Residues 18 to 38 form a helical membrane-spanning segment; the sequence is SSLTCSIFAFTLLMIFFVLDW. Topologically, residues 39–348 are vacuolar; the sequence is KRMNVYPRLD…GSYWQINLNL (310 aa). 2 residues coordinate Zn(2+): His146 and Asp158. Glu190 (proton acceptor) is an active-site residue. Glu191 provides a ligand contact to Zn(2+). N-linked (GlcNAc...) asparagine glycosylation is present at Asn208. Glu216 provides a ligand contact to Zn(2+). Asn274 carries N-linked (GlcNAc...) asparagine glycosylation. Residue His291 participates in Zn(2+) binding. The chain crosses the membrane as a helical span at residues 349 to 369; it reads HLFLNVVFLIACPAILFMCLF. At 370–381 the chain is on the cytoplasmic side; sequence RFPSLYAQLKKP. A helical membrane pass occupies residues 382-402; sequence CYLICFTLSSLFVLIFDYVVV. Topologically, residues 403-415 are vacuolar; that stretch reads QSLTKLNPYVIHS. Residues 416–436 form a helical membrane-spanning segment; sequence SPDAVLAFFFLTNLLGLVYSF. The Cytoplasmic portion of the chain corresponds to 437-454; the sequence is RYVATHSRMSNEELSCIE. The helical transmembrane segment at 455–475 threads the bilayer; it reads IVLIWYVSMFWYISLLIATLT. At 476–482 the chain is on the vacuolar side; sequence SIVRGLG. The chain crosses the membrane as a helical span at residues 483–503; sequence SLYFVNFGFFCSFFCCILTLI. At 504–560 the chain is on the cytoplasmic side; sequence RVRYFVDRMVTINRPANPEQMPLVQSTSGNAYGTSRYPQHRLKAVVSKSASVKLNDN. A helical membrane pass occupies residues 561-581; sequence LWSVLFFSCLVPLPLFTCYNL. Topologically, residues 582-605 are vacuolar; sequence LSEVFIPAVHQSLIDGPYSNTCYK. A helical transmembrane segment spans residues 606-626; it reads FAVILVFMAIINSSPFVFRAL. Residues 627–630 lie on the Cytoplasmic side of the membrane; the sequence is SKKS. Residues 631-651 traverse the membrane as a helical segment; the sequence is SAILLMLWVSLLFNILRAEPF. Over 652-847 the chain is Vacuolar; the sequence is NEKAPIKFRV…LLKMSKTHVM (196 aa). N-linked (GlcNAc...) asparagine glycans are attached at residues Asn726, Asn734, Asn800, and Asn834.

This sequence belongs to the peptidase M28 family. Zn(2+) serves as cofactor.

It localises to the vacuole membrane. Functionally, may be involved in vacuolar sorting and osmoregulation. The protein is Vacuolar membrane protease of Schizosaccharomyces japonicus (strain yFS275 / FY16936) (Fission yeast).